Here is a 269-residue protein sequence, read N- to C-terminus: Bis(5'-nucleosyl)-tetraphosphatase, symmetrical (269 aa).

This sequence belongs to the Ap4A hydrolase family.

It carries out the reaction P(1),P(4)-bis(5'-adenosyl) tetraphosphate + H2O = 2 ADP + 2 H(+). Functionally, hydrolyzes diadenosine 5',5'''-P1,P4-tetraphosphate to yield ADP. In Vibrio cholerae serotype O1 (strain ATCC 39541 / Classical Ogawa 395 / O395), this protein is Bis(5'-nucleosyl)-tetraphosphatase, symmetrical.